The following is a 148-amino-acid chain: U5-hexatoxin-Hi1a (148 aa).

The N-terminal stretch at 1–21 (MNFSVVAVALVVVLTVHFTDG) is a signal peptide. The propeptide occupies 22–38 (QETSSSLPSPPSPLPGR). The interval 125–148 (TPSTTVTTPTPTTETPTTETPSTP) is disordered.

In terms of processing, contains 2 disulfide bonds. Expressed by the venom gland.

The protein resides in the secreted. In terms of biological role, probable ion channel inhibitor. This is U5-hexatoxin-Hi1a from Hadronyche infensa (Fraser island funnel-web spider).